Here is a 185-residue protein sequence, read N- to C-terminus: Ribosome-recycling factor (185 aa).

It belongs to the RRF family.

The protein localises to the cytoplasm. In terms of biological role, responsible for the release of ribosomes from messenger RNA at the termination of protein biosynthesis. May increase the efficiency of translation by recycling ribosomes from one round of translation to another. The chain is Ribosome-recycling factor from Syntrophobacter fumaroxidans (strain DSM 10017 / MPOB).